The following is a 199-amino-acid chain: Dephospho-CoA kinase (199 aa).

Residues 11-199 (RIGLTGGIAS…DLHDQLDALL (189 aa)) form the DPCK domain. ATP is bound at residue 19–24 (ASGKSS).

This sequence belongs to the CoaE family.

It is found in the cytoplasm. It catalyses the reaction 3'-dephospho-CoA + ATP = ADP + CoA + H(+). Its pathway is cofactor biosynthesis; coenzyme A biosynthesis; CoA from (R)-pantothenate: step 5/5. In terms of biological role, catalyzes the phosphorylation of the 3'-hydroxyl group of dephosphocoenzyme A to form coenzyme A. The chain is Dephospho-CoA kinase from Synechococcus sp. (strain CC9902).